We begin with the raw amino-acid sequence, 232 residues long: Thiamine import ATP-binding protein ThiQ (232 aa).

An ABC transporter domain is found at 2 to 230; sequence LKLTDITWLY…KASASALLGI (229 aa). 32-39 contributes to the ATP binding site; the sequence is GPSGAGKS.

Belongs to the ABC transporter superfamily. Thiamine importer (TC 3.A.1.19.1) family. The complex is composed of two ATP-binding proteins (ThiQ), two transmembrane proteins (ThiP) and a solute-binding protein (ThiB).

The protein localises to the cell inner membrane. It catalyses the reaction thiamine(out) + ATP + H2O = thiamine(in) + ADP + phosphate + H(+). Functionally, part of the ABC transporter complex ThiBPQ involved in thiamine import. Responsible for energy coupling to the transport system. This is Thiamine import ATP-binding protein ThiQ from Escherichia coli O6:H1 (strain CFT073 / ATCC 700928 / UPEC).